The sequence spans 173 residues: HTH-type transcriptional regulator IscR (173 aa).

In terms of domain architecture, HTH rrf2-type spans 2 to 131 (KLTSKGRYAV…NDITLGELMK (130 aa)). A DNA-binding region (H-T-H motif) is located at residues 28-51 (LADISERQGISLSYLEQLFSKLRK). Residues Cys-92, Cys-98, and Cys-104 each coordinate [2Fe-2S] cluster.

Requires [2Fe-2S] cluster as cofactor.

Its function is as follows. Regulates the transcription of several operons and genes involved in the biogenesis of Fe-S clusters and Fe-S-containing proteins. This chain is HTH-type transcriptional regulator IscR, found in Vibrio atlanticus (strain LGP32) (Vibrio splendidus (strain Mel32)).